The sequence spans 386 residues: Cytochrome b (386 aa).

4 consecutive transmembrane segments (helical) span residues 32–52 (FGSLLALCLGIQIVTGVTLAM), 76–98 (WLIRYLHANTASAFFFLVYLHMG), 113–133 (TWNIGVVIFIVMIVTAFLGYV), and 179–199 (FFSLHYLLPFILAALVLMHLI). Residues H82 and H96 each coordinate heme b. The heme b site is built by H183 and H197. H202 provides a ligand contact to a ubiquinone. The next 4 membrane-spanning stretches (helical) occupy residues 226–246 (FLFKDLVTIFLFMLGLSIFVL), 290–310 (TLGVVAMLGAILILMALPYLD), 322–342 (LSKIAFYIFIANFLVLMILGA), and 349–369 (FIIFGQISTTLYFSYFIIITP).

The protein belongs to the cytochrome b family. In terms of assembly, fungal cytochrome b-c1 complex contains 10 subunits; 3 respiratory subunits, 2 core proteins and 5 low-molecular weight proteins. Cytochrome b-c1 complex is a homodimer. Heme b is required as a cofactor.

It is found in the mitochondrion inner membrane. In terms of biological role, component of the ubiquinol-cytochrome c reductase complex (complex III or cytochrome b-c1 complex) that is part of the mitochondrial respiratory chain. The b-c1 complex mediates electron transfer from ubiquinol to cytochrome c. Contributes to the generation of a proton gradient across the mitochondrial membrane that is then used for ATP synthesis. The polypeptide is Cytochrome b (COB) (Trichophyton rubrum (Athlete's foot fungus)).